Consider the following 437-residue polypeptide: Sorting nexin-30 (437 aa).

Residues 1–45 are disordered; sequence MAGGPPKALPSTGPQSLRDMPHPLAGSSSEEAVGGDSTPSPDLLM. Threonine 38 is modified (phosphothreonine). Serine 40 carries the phosphoserine modification. The PX domain occupies 89-210; the sequence is RDLFVTVDDP…VFLTAKDLNA (122 aa). The a 1,2-diacyl-sn-glycero-3-phospho-(1D-myo-inositol-3-phosphate) site is built by arginine 132, glutamine 134, lysine 162, and arginine 176. A BAR domain is found at 234–437; that stretch reads KLRSRPLEFA…PLLQEKQETK (204 aa).

It belongs to the sorting nexin family. In terms of assembly, heterodimer; heterodimerizes with SNX4.

The protein resides in the early endosome membrane. Involved in the regulation of endocytosis and in several stages of intracellular trafficking. Together with SNX4, involved in autophagosome assembly. This chain is Sorting nexin-30, found in Mus musculus (Mouse).